The following is a 163-amino-acid chain: K88 minor fimbrial subunit FaeF (163 aa).

An N-terminal signal peptide occupies residues 1–22 (MKKTMMAAALVLSALSIQSALA).

It is found in the fimbrium. K88 minor fimbrial subunit, plays an essential role in the biogenesis of the K88 fimbriae. required at some step in the initiation and/or elongation of the K88 fimbriae. The chain is K88 minor fimbrial subunit FaeF (faeF) from Escherichia coli.